We begin with the raw amino-acid sequence, 95 residues long: Aspartyl/glutamyl-tRNA(Asn/Gln) amidotransferase subunit C (95 aa).

Belongs to the GatC family. In terms of assembly, heterotrimer of A, B and C subunits.

It catalyses the reaction L-glutamyl-tRNA(Gln) + L-glutamine + ATP + H2O = L-glutaminyl-tRNA(Gln) + L-glutamate + ADP + phosphate + H(+). It carries out the reaction L-aspartyl-tRNA(Asn) + L-glutamine + ATP + H2O = L-asparaginyl-tRNA(Asn) + L-glutamate + ADP + phosphate + 2 H(+). Its function is as follows. Allows the formation of correctly charged Asn-tRNA(Asn) or Gln-tRNA(Gln) through the transamidation of misacylated Asp-tRNA(Asn) or Glu-tRNA(Gln) in organisms which lack either or both of asparaginyl-tRNA or glutaminyl-tRNA synthetases. The reaction takes place in the presence of glutamine and ATP through an activated phospho-Asp-tRNA(Asn) or phospho-Glu-tRNA(Gln). The sequence is that of Aspartyl/glutamyl-tRNA(Asn/Gln) amidotransferase subunit C from Azorhizobium caulinodans (strain ATCC 43989 / DSM 5975 / JCM 20966 / LMG 6465 / NBRC 14845 / NCIMB 13405 / ORS 571).